Reading from the N-terminus, the 787-residue chain is Integrin beta-6 (787 aa).

The first 21 residues, 1 to 21 (MGIELLCLFFLFLGRNDHVQG), serve as a signal peptide directing secretion. The PSI domain occupies 22–71 (GCAMGGAETCEDCLLIGPQCAWCSQENFTHLSGVGERCDTPANLLAKGCQ). The Extracellular segment spans residues 22 to 708 (GCAMGGAETC…KDCPKPPNIP (687 aa)). 19 cysteine pairs are disulfide-bonded: C23-C41, C31-C454, C34-C59, C44-C70, C197-C204, C252-C293, C394-C406, C426-C452, C456-C476, C467-C479, C481-C490, C492-C519, C502-C517, C511-C522, C524-C537, C539-C560, C544-C558, C552-C563, and C565-C574. Residues N48 and N97 are each glycosylated (N-linked (GlcNAc...) asparagine). One can recognise a VWFA domain in the interval 131 to 371 (YPVDLYYLMD…QLIISAYEEL (241 aa)). Residues D140, S142, and S144 each contribute to the Mg(2+) site. S144, D147, D148, and E179 together coordinate Ca(2+). 4 residues coordinate Ca(2+): N235, D237, P239, and E240. E240 provides a ligand contact to Mg(2+). Residue N260 is glycosylated (N-linked (GlcNAc...) asparagine). Ca(2+) contacts are provided by D271 and K355. Residue N387 is glycosylated (N-linked (GlcNAc...) asparagine). N418 is a glycosylation site (N-linked (GlcNAc...) asparagine). 4 consecutive I-EGF domains span residues 456–491 (CQKEVEVNSSKCSNGNGSFQCGVCACNPGHVGHHCE), 492–538 (CGED…PYCQ), 539–575 (CDNFSCVRHKGLLCGDNGDCDCGECVCRSGWTGEYCN), and 576–615 (CTTSTDPCVSEDGILCSGRGDCVCGKCICTNPGASGPACE). N-linked (GlcNAc...) asparagine glycosylation is found at N463 and N471. N-linked (GlcNAc...) asparagine glycosylation is present at N541. N575 carries N-linked (GlcNAc...) asparagine glycosylation. Cystine bridges form between C576/C599, C583/C597, C591/C602, C604/C614, C617/C620, C624/C670, C630/C649, C633/C645, and C678/C701. The helical transmembrane segment at 709–729 (MIMLGVSLAILLIGVALLCIW) threads the bilayer. The interval 730 to 757 (KLLVSFHDRKEVAKFEAERSKAKWQTGT) is interaction with HAX1. Residues 730–787 (KLLVSFHDRKEVAKFEAERSKAKWQTGTNPLYRGSTSTFKNVTYKHKEKQKVDLSTDG) are Cytoplasmic-facing.

It belongs to the integrin beta chain family. As to quaternary structure, heterodimer of an alpha and a beta subunit. Interacts with FLNB. Interacts with HAX1. ITGAV:ITGB6 interacts with FBN1. ITGAV:ITGB6 interacts with TGFB1.

It is found in the cell membrane. It localises to the cell junction. The protein localises to the focal adhesion. In terms of biological role, integrin alpha-V:beta-6 (ITGAV:ITGB6) is a receptor for fibronectin and cytotactin. It recognizes the sequence R-G-D in its ligands. ITGAV:ITGB6 acts as a receptor for fibrillin-1 (FBN1) and mediates R-G-D-dependent cell adhesion to FBN1. Integrin alpha-V:beta-6 (ITGAV:ITGB6) mediates R-G-D-dependent release of transforming growth factor beta-1 (TGF-beta-1) from regulatory Latency-associated peptide (LAP), thereby playing a key role in TGF-beta-1 activation. The chain is Integrin beta-6 (ITGB6) from Ovis aries (Sheep).